Consider the following 729-residue polypeptide: Fatty acid oxidation complex subunit alpha (729 aa).

The segment at 1–189 (MLYKGDTLYL…KIGLVDGVVK (189 aa)) is enoyl-CoA hydratase/isomerase. Asp-296 provides a ligand contact to substrate. Residues 311-729 (ETPKQAAVLG…ARPVGDLKTA (419 aa)) form a 3-hydroxyacyl-CoA dehydrogenase region. NAD(+)-binding positions include Met-324, Asp-343, 400–402 (VVE), Lys-407, and Ser-429. His-450 acts as the For 3-hydroxyacyl-CoA dehydrogenase activity in catalysis. Asn-453 contacts NAD(+). Substrate-binding residues include Asn-500 and Tyr-660. The interval 708–729 (RHNEPYYPPVEPARPVGDLKTA) is disordered.

It in the N-terminal section; belongs to the enoyl-CoA hydratase/isomerase family. The protein in the C-terminal section; belongs to the 3-hydroxyacyl-CoA dehydrogenase family. In terms of assembly, heterotetramer of two alpha chains (FadB) and two beta chains (FadA).

It catalyses the reaction a (3S)-3-hydroxyacyl-CoA + NAD(+) = a 3-oxoacyl-CoA + NADH + H(+). The catalysed reaction is a (3S)-3-hydroxyacyl-CoA = a (2E)-enoyl-CoA + H2O. It carries out the reaction a 4-saturated-(3S)-3-hydroxyacyl-CoA = a (3E)-enoyl-CoA + H2O. The enzyme catalyses (3S)-3-hydroxybutanoyl-CoA = (3R)-3-hydroxybutanoyl-CoA. It catalyses the reaction a (3Z)-enoyl-CoA = a 4-saturated (2E)-enoyl-CoA. The catalysed reaction is a (3E)-enoyl-CoA = a 4-saturated (2E)-enoyl-CoA. The protein operates within lipid metabolism; fatty acid beta-oxidation. Its function is as follows. Involved in the aerobic and anaerobic degradation of long-chain fatty acids via beta-oxidation cycle. Catalyzes the formation of 3-oxoacyl-CoA from enoyl-CoA via L-3-hydroxyacyl-CoA. It can also use D-3-hydroxyacyl-CoA and cis-3-enoyl-CoA as substrate. The polypeptide is Fatty acid oxidation complex subunit alpha (Escherichia coli (strain K12 / MC4100 / BW2952)).